Consider the following 252-residue polypeptide: 2-succinyl-6-hydroxy-2,4-cyclohexadiene-1-carboxylate synthase (252 aa).

It belongs to the AB hydrolase superfamily. MenH family. In terms of assembly, monomer.

It carries out the reaction 5-enolpyruvoyl-6-hydroxy-2-succinyl-cyclohex-3-ene-1-carboxylate = (1R,6R)-6-hydroxy-2-succinyl-cyclohexa-2,4-diene-1-carboxylate + pyruvate. The protein operates within quinol/quinone metabolism; 1,4-dihydroxy-2-naphthoate biosynthesis; 1,4-dihydroxy-2-naphthoate from chorismate: step 3/7. Its pathway is quinol/quinone metabolism; menaquinone biosynthesis. Catalyzes a proton abstraction reaction that results in 2,5-elimination of pyruvate from 2-succinyl-5-enolpyruvyl-6-hydroxy-3-cyclohexene-1-carboxylate (SEPHCHC) and the formation of 2-succinyl-6-hydroxy-2,4-cyclohexadiene-1-carboxylate (SHCHC). This Escherichia coli O81 (strain ED1a) protein is 2-succinyl-6-hydroxy-2,4-cyclohexadiene-1-carboxylate synthase.